A 118-amino-acid polypeptide reads, in one-letter code: Small ribosomal subunit protein uS13 (118 aa).

The segment at 94–118 (SLPVRGQRSKTNARTRKGPRKAIKK) is disordered.

It belongs to the universal ribosomal protein uS13 family. In terms of assembly, part of the 30S ribosomal subunit. Forms a loose heterodimer with protein S19. Forms two bridges to the 50S subunit in the 70S ribosome.

Its function is as follows. Located at the top of the head of the 30S subunit, it contacts several helices of the 16S rRNA. In the 70S ribosome it contacts the 23S rRNA (bridge B1a) and protein L5 of the 50S subunit (bridge B1b), connecting the 2 subunits; these bridges are implicated in subunit movement. Contacts the tRNAs in the A and P-sites. The chain is Small ribosomal subunit protein uS13 from Psychromonas ingrahamii (strain DSM 17664 / CCUG 51855 / 37).